We begin with the raw amino-acid sequence, 761 residues long: Zinc finger protein 287 (761 aa).

In terms of domain architecture, SCAN box spans 49–131 (RQNFRNFPYP…TLVEDLTQIL (83 aa)). The interval 134–154 (EAPQNSTLSQDTPEEDPRGKH) is disordered. One can recognise a KRAB domain in the interval 170–238 (MTFKDVAVDI…IKEILEGPSP (69 aa)). 14 consecutive C2H2-type zinc fingers follow at residues 368–390 (YKCN…QSTH), 396–418 (YECE…QRMH), 424–446 (YECH…QRIH), 452–474 (YKCD…QRTH), 480–502 (YKCL…QRVH), 508–530 (YICN…QKIH), 536–558 (YKCN…QRIH), 564–586 (YKCN…QTTH), 592–614 (YICN…HRTH), 620–642 (YKCS…QRIH), 648–670 (FKCN…QRIH), 676–698 (YKCN…QRTH), 704–726 (YKCN…QRIH), and 732–754 (YACR…QRVH).

Belongs to the krueppel C2H2-type zinc-finger protein family.

The protein localises to the nucleus. May be involved in transcriptional regulation. This chain is Zinc finger protein 287, found in Pongo pygmaeus (Bornean orangutan).